The following is a 2378-amino-acid chain: Serine/threonine-protein kinase ATM (2378 aa).

The FAT domain occupies 1415–1937 (LSARKRNTMM…LHTILMYDDE (523 aa)). The PI3K/PI4K catalytic domain maps to 2044–2366 (WKDVFTIADG…LLREATSADN (323 aa)). The G-loop stretch occupies residues 2050 to 2056 (IADGIST). Residues 2218 to 2226 (GLGDRHASN) form a catalytic loop region. Residues 2238 to 2263 (HIDLGMILEYSKRTLPVPEQVPFRIT) form an activation loop region. The FATC domain occupies 2346-2378 (TAQSSNLQIRRLLREATSADNLSRMFCGWMPFL).

It belongs to the PI3/PI4-kinase family. ATM subfamily.

It is found in the nucleus. It carries out the reaction L-seryl-[protein] + ATP = O-phospho-L-seryl-[protein] + ADP + H(+). The catalysed reaction is L-threonyl-[protein] + ATP = O-phospho-L-threonyl-[protein] + ADP + H(+). Serine/threonine protein kinase which activates checkpoint signaling in the presence of DNA double strand breaks (DSBs) and other forms of DNA damage induced by ionizing radiation and other genotoxic stresses such as UV. Plays a role in maintaining genome stability. The protein is Serine/threonine-protein kinase ATM (atm-1) of Caenorhabditis elegans.